A 557-amino-acid chain; its full sequence is Thermosome subunit 2 (557 aa).

The segment at aspartate 527 to methionine 557 is disordered. Residues glycine 539–methionine 557 are compositionally biased toward gly residues.

This sequence belongs to the TCP-1 chaperonin family. The thermosome or CCT complex is a oligomeric complex of two octameric double-ring structures; the complex is probably a heterooligomer of CCT1, CCT2 and CCT3 with yet unknown stoichiometry.

In terms of biological role, molecular chaperone that assists in the folding or refolding of nascent or denatured proteins along with ATP hydrolysis. ATPase activity is highest in thermosome assemblies containing CCT1:CCT2, followed by assemblies containing CCT1:CCT2:CCT3. Seems to contribute to thermosome ATPase activity. Not required for growth. The chain is Thermosome subunit 2 (cct2) from Haloferax volcanii (strain ATCC 29605 / DSM 3757 / JCM 8879 / NBRC 14742 / NCIMB 2012 / VKM B-1768 / DS2) (Halobacterium volcanii).